Reading from the N-terminus, the 156-residue chain is ATP synthase subunit b (156 aa).

The helical transmembrane segment at phenylalanine 7–proline 27 threads the bilayer.

This sequence belongs to the ATPase B chain family. As to quaternary structure, F-type ATPases have 2 components, F(1) - the catalytic core - and F(0) - the membrane proton channel. F(1) has five subunits: alpha(3), beta(3), gamma(1), delta(1), epsilon(1). F(0) has three main subunits: a(1), b(2) and c(10-14). The alpha and beta chains form an alternating ring which encloses part of the gamma chain. F(1) is attached to F(0) by a central stalk formed by the gamma and epsilon chains, while a peripheral stalk is formed by the delta and b chains.

Its subcellular location is the cell inner membrane. In terms of biological role, f(1)F(0) ATP synthase produces ATP from ADP in the presence of a proton or sodium gradient. F-type ATPases consist of two structural domains, F(1) containing the extramembraneous catalytic core and F(0) containing the membrane proton channel, linked together by a central stalk and a peripheral stalk. During catalysis, ATP synthesis in the catalytic domain of F(1) is coupled via a rotary mechanism of the central stalk subunits to proton translocation. Component of the F(0) channel, it forms part of the peripheral stalk, linking F(1) to F(0). The chain is ATP synthase subunit b from Cupriavidus metallidurans (strain ATCC 43123 / DSM 2839 / NBRC 102507 / CH34) (Ralstonia metallidurans).